A 116-amino-acid chain; its full sequence is Nucleoid-associated protein P9215_00191 (116 aa).

It belongs to the YbaB/EbfC family. As to quaternary structure, homodimer.

The protein resides in the cytoplasm. It localises to the nucleoid. Binds to DNA and alters its conformation. May be involved in regulation of gene expression, nucleoid organization and DNA protection. The polypeptide is Nucleoid-associated protein P9215_00191 (Prochlorococcus marinus (strain MIT 9215)).